Here is a 93-residue protein sequence, read N- to C-terminus: Small ribosomal subunit protein uS19 (93 aa).

The interval 73–93 (EFSPTRTFRGHVKDDRKSKRR) is disordered. The span at 83–93 (HVKDDRKSKRR) shows a compositional bias: basic and acidic residues.

The protein belongs to the universal ribosomal protein uS19 family.

Protein S19 forms a complex with S13 that binds strongly to the 16S ribosomal RNA. This is Small ribosomal subunit protein uS19 from Streptomyces avermitilis (strain ATCC 31267 / DSM 46492 / JCM 5070 / NBRC 14893 / NCIMB 12804 / NRRL 8165 / MA-4680).